The following is a 1240-amino-acid chain: Ubiquitin carboxyl-terminal hydrolase 36 (1240 aa).

Disordered regions lie at residues 37-56 and 100-144; these read AKTS…STDN and SNGG…GTSA. Low complexity-rich tracts occupy residues 47-56 and 101-132; these read SSTSGSSTDN and NGGA…DNNG. Residues 202–512 form the USP domain; the sequence is TGMLNVGNTC…NAYIMFYELD (311 aa). The active-site Nucleophile is the Cys-211. His-471 functions as the Proton acceptor in the catalytic mechanism. A disordered region spans residues 637 to 705; sequence ANKSSCNTLN…KMFEESSESV (69 aa). The span at 639–649 shows a compositional bias: polar residues; it reads KSSCNTLNNSK. Low complexity predominate over residues 650-662; that stretch reads QHQPQQQQQQPQH. Positions 668-680 are enriched in acidic residues; the sequence is SDEEEDSDDDNDN. A Phosphothreonine modification is found at Thr-715. Disordered stretches follow at residues 723 to 818, 831 to 998, 1076 to 1163, and 1198 to 1240; these read YESA…KQKT, YKNK…GESL, DMSS…EYES, and RFAG…QQQS. Phosphoserine is present on residues Ser-725 and Ser-727. The segment covering 733–744 has biased composition (low complexity); that stretch reads QQQQQQQTLQQQ. Positions 759 to 769 are enriched in acidic residues; the sequence is SDTDDDDDEEQ. Positions 794-815 are enriched in low complexity; it reads NSSSSKTKSASNASSANVNSSK. The segment covering 843–859 has biased composition (acidic residues); that stretch reads DDDDDDDEDEDEDEDEA. Residues 869 to 879 are compositionally biased toward low complexity; that stretch reads TKSSSSSSSTS. Positions 880 to 890 are enriched in polar residues; the sequence is LTNGWQQSQNG. Ser-895 carries the post-translational modification Phosphoserine. At Thr-898 the chain carries Phosphothreonine. Position 901 is a phosphoserine (Ser-901). Acidic residues predominate over residues 918-941; it reads DEDDDENVDGVADADDDDDNDEVA. Residues 976 to 988 show a composition bias toward polar residues; it reads LNGSSKSQQTTPR. The span at 1076 to 1103 shows a compositional bias: low complexity; it reads DMSSSSSSSSSTNSSSNSSSRSNGNSSN. Over residues 1111-1120 the composition is skewed to basic and acidic residues; sequence AEAREQRKRD. Positions 1231 to 1240 are enriched in low complexity; the sequence is QSSGQQQQQS.

Belongs to the peptidase C19 family. Interacts with atms/PAF1, but not with CycT.

The protein resides in the nucleus. The protein localises to the nucleolus. The enzyme catalyses Thiol-dependent hydrolysis of ester, thioester, amide, peptide and isopeptide bonds formed by the C-terminal Gly of ubiquitin (a 76-residue protein attached to proteins as an intracellular targeting signal).. Functionally, required for maintaining multiple types of adult stem cells, including male and female germline, epithelial follicle cell and intestinal stem cells. May function as a transcriptional repressor by continually deubiquiting histone H2B at the promoters of genes critical for cellular differentiation, thereby preventing histone H3 'Lys-4' trimethylation (H3K4). Controls selective autophagy activation by ubiquitinated proteins. The polypeptide is Ubiquitin carboxyl-terminal hydrolase 36 (Usp36) (Drosophila grimshawi (Hawaiian fruit fly)).